Consider the following 42-residue polypeptide: Thymosin beta-10 (42 aa).

2 stretches are compositionally biased toward basic and acidic residues: residues 1 to 25 (MADK…ETQE) and 33 to 42 (ETIEQEKQAK). The disordered stretch occupies residues 1-42 (MADKPDLGEINSFDKAKLKKTETQEKNTLPTKETIEQEKQAK). At alanine 2 the chain carries N-acetylalanine. An N6-acetyllysine modification is found at lysine 4. Serine 12 is modified (phosphoserine). At lysine 15 the chain carries N6-acetyllysine. Phosphothreonine occurs at positions 21, 23, and 34. At lysine 39 the chain carries N6-acetyllysine.

Belongs to the thymosin beta family. As to expression, distributed in numerous types of tissues, including thymus, spleen, lung, liver and muscle.

Its subcellular location is the cytoplasm. It localises to the cytoskeleton. In terms of biological role, plays an important role in the organization of the cytoskeleton. Binds to and sequesters actin monomers (G actin) and therefore inhibits actin polymerization. The protein is Thymosin beta-10 (TMSB10) of Bos taurus (Bovine).